Reading from the N-terminus, the 609-residue chain is Cationic amino acid transporter 3, mitochondrial (609 aa).

A mitochondrion-targeting transit peptide spans 1–14 (MGCLRSLVRRKQFD). Helical transmembrane passes span 38-58 (LIAIGVGSTIGAGVYILVGTV), 66-86 (ALALSFLIAGISAALSAFCYA), 104-124 (ICIGEGVAWLIGWALILEYTI), 161-181 (IVVDPCAAVLVFIVTGLCCLG), 190-210 (GIVTTANVFVMIFVIVAGSYL), 226-246 (FPYGVDGMLTGSATVFFAYIG), 270-290 (ISLLLCCLLYMMVSVVIVGLV), 314-334 (AYLINLGAVMALCSALMGSIL), 361-381 (QVPINGTITTGVCAAILAFFM), 388-408 (GMVSVGTLVAFTMVAISLLIV), 474-494 (IMFTCIGNFLLSYAASSFLLP), 499-519 (YSLCGVGGLFLLVGLIVLICI), 534-554 (FICPFVPLLPIVCILINMYLL), and 558-578 (GAATWVRVSVWLFLGVVVYIF).

This sequence belongs to the amino acid-polyamine-organocation (APC) superfamily. Cationic amino acid transporter (CAT) (TC 2.A.3.3) family. Expressed in roots, stems, flowers, and leaves.

The protein resides in the mitochondrion membrane. In terms of biological role, permease involved in the transport of the cationic neutral or acidic amino acids. The chain is Cationic amino acid transporter 3, mitochondrial (CAT3) from Arabidopsis thaliana (Mouse-ear cress).